We begin with the raw amino-acid sequence, 195 residues long: HTH-type transcriptional regulator BetI (195 aa).

The HTH tetR-type domain maps to 8-68 (EIRRAQLIDA…ATMRHVLRDL (61 aa)). Positions 31–50 (TLASVAQRANISTGIVSHYF) form a DNA-binding region, H-T-H motif.

It participates in amine and polyamine biosynthesis; betaine biosynthesis via choline pathway [regulation]. Repressor involved in the biosynthesis of the osmoprotectant glycine betaine. It represses transcription of the choline transporter BetT and the genes of BetAB involved in the synthesis of glycine betaine. This is HTH-type transcriptional regulator BetI from Burkholderia mallei (strain NCTC 10247).